A 286-amino-acid polypeptide reads, in one-letter code: D-tagatose-1,6-bisphosphate aldolase subunit KbaY (286 aa).

D82 serves as the catalytic Proton donor. Positions 83 and 180 each coordinate Zn(2+). G181 provides a ligand contact to dihydroxyacetone phosphate. Residue H208 coordinates Zn(2+). Dihydroxyacetone phosphate-binding positions include 209-211 and 230-233; these read GAS and NVAT.

This sequence belongs to the class II fructose-bisphosphate aldolase family. TagBP aldolase KbaY subfamily. Homotetramer. Forms a complex with KbaZ. The cofactor is Zn(2+).

The catalysed reaction is D-tagatofuranose 1,6-bisphosphate = D-glyceraldehyde 3-phosphate + dihydroxyacetone phosphate. Its pathway is carbohydrate metabolism; D-tagatose 6-phosphate degradation; D-glyceraldehyde 3-phosphate and glycerone phosphate from D-tagatose 6-phosphate: step 2/2. In terms of biological role, catalytic subunit of the tagatose-1,6-bisphosphate aldolase KbaYZ, which catalyzes the reversible aldol condensation of dihydroxyacetone phosphate (DHAP or glycerone-phosphate) with glyceraldehyde 3-phosphate (G3P) to produce tagatose 1,6-bisphosphate (TBP). Requires KbaZ subunit for full activity and stability. Is involved in the catabolism of N-acetylgalactosamine and D-galactosamine. This is D-tagatose-1,6-bisphosphate aldolase subunit KbaY (kbaY) from Escherichia coli.